The sequence spans 531 residues: PHD finger protein 21B (531 aa).

Disordered regions lie at residues 79–99 (PDSL…PTFQ), 184–222 (SADN…SLSP), 238–277 (VQTQ…ENPE), and 295–314 (EIQS…PAYS). Positions 265–277 (KKEDRPPTQENPE) are enriched in basic and acidic residues. The PHD-type zinc finger occupies 352-399 (DEHCAACKRGANLQPCGTCPGAYHLSCLEPPLKTAPKGVWVCPRCQQK). Residues 423 to 465 (KTVKEEEKQKLLQRGSELQNEHQQLEERDRRLASAVQKCLELK) are a coiled coil. A disordered region spans residues 507–531 (LLAGPWTKPSVAATHPTVQHPQGHN). A compositionally biased stretch (polar residues) spans 522–531 (PTVQHPQGHN).

The sequence is that of PHD finger protein 21B (PHF21B) from Homo sapiens (Human).